The following is a 490-amino-acid chain: Betaine aldehyde dehydrogenase (490 aa).

Isoleucine 27 and aspartate 93 together coordinate K(+). Position 150–152 (150–152 (GAW)) interacts with NAD(+). Lysine 162 serves as the catalytic Charge relay system. 176–179 (KPSE) is a binding site for NAD(+). Residue valine 180 coordinates K(+). Residue 230–233 (GTTT) coordinates NAD(+). Leucine 246 contributes to the K(+) binding site. Catalysis depends on glutamate 252, which acts as the Proton acceptor. Residues glycine 254, cysteine 286, and glutamate 387 each coordinate NAD(+). The active-site Nucleophile is cysteine 286. At cysteine 286 the chain carries Cysteine sulfenic acid (-SOH). The K(+) site is built by lysine 457 and glycine 460. The active-site Charge relay system is the glutamate 464.

Belongs to the aldehyde dehydrogenase family. Dimer of dimers. K(+) is required as a cofactor.

The enzyme catalyses betaine aldehyde + NAD(+) + H2O = glycine betaine + NADH + 2 H(+). It participates in amine and polyamine biosynthesis; betaine biosynthesis via choline pathway; betaine from betaine aldehyde: step 1/1. Involved in the biosynthesis of the osmoprotectant glycine betaine. Catalyzes the irreversible oxidation of betaine aldehyde to the corresponding acid. This is Betaine aldehyde dehydrogenase from Pseudomonas putida (strain GB-1).